Here is a 133-residue protein sequence, read N- to C-terminus: Fatty acid-binding protein, heart (133 aa).

Alanine 2 is modified (N-acetylalanine). The residue at position 8 (threonine 8) is a Phosphothreonine. The residue at position 20 (tyrosine 20) is a Phosphotyrosine; by Tyr-kinases. Serine 23 bears the Phosphoserine mark. The residue at position 30 (threonine 30) is a Phosphothreonine. Serine 83 carries the phosphoserine modification. Arginine 127–tyrosine 129 is a binding site for (9Z)-octadecenoate. Position 127 to 129 (arginine 127 to tyrosine 129) interacts with hexadecanoate. Arginine 127–tyrosine 129 is a binding site for octadecanoate.

This sequence belongs to the calycin superfamily. Fatty-acid binding protein (FABP) family.

The protein resides in the cytoplasm. FABPs are thought to play a role in the intracellular transport of long-chain fatty acids and their acyl-CoA esters. The chain is Fatty acid-binding protein, heart (Fabp3) from Mus musculus (Mouse).